A 144-amino-acid polypeptide reads, in one-letter code: Large ribosomal subunit protein uL13 (144 aa).

Belongs to the universal ribosomal protein uL13 family. As to quaternary structure, part of the 50S ribosomal subunit.

This protein is one of the early assembly proteins of the 50S ribosomal subunit, although it is not seen to bind rRNA by itself. It is important during the early stages of 50S assembly. The polypeptide is Large ribosomal subunit protein uL13 (Nitrosomonas europaea (strain ATCC 19718 / CIP 103999 / KCTC 2705 / NBRC 14298)).